The following is a 38-amino-acid chain: GVIINVKCKISRQCLEPCKKAGMRFGKCMNGKCHCTPK.

Intrachain disulfides connect Cys8–Cys28, Cys14–Cys33, and Cys18–Cys35.

Belongs to the short scorpion toxin superfamily. Potassium channel inhibitor family. Alpha-KTx 03 subfamily. In terms of tissue distribution, expressed by the venom gland.

The protein localises to the secreted. Blocks voltage-gated potassium channels Kv1.1/KCNA1 (IC(50)=0.6 nM), Kv1.2/KCNA2 (IC(50)=5.4 nM), Kv1.3/KCNA3 (IC(50)=0.014 nM) potently, and moderately block intermediate conductance calcium-activated potassium channels KCa3.1/KCNN4 (IC(50)=225 nM). Also shows activity on muscle-type nicotinic acetylcholine receptor (nAChR), since it reversibly and dose-dependently inhibits acetylcholine-induced current through mouse muscle-type nAChR heterologously expressed in Xenopus oocytes (IC(50)=1.6 uM). The sequence is that of Potassium channel toxin alpha-KTx 3.7 from Orthochirus scrobiculosus (Central Asian scorpion).